We begin with the raw amino-acid sequence, 423 residues long: F-box/LRR-repeat protein 2 (423 aa).

Positions 9–55 (GLINKKLPKELLLRIFSFLDIVTLCRCAQISKAWNILALDGSNWQRI) constitute an F-box domain. 13 LRR repeats span residues 61–87 (QTDVEGRVVENISKRCGGFLRKLSLRG), 88–113 (CIGVGDSSLKTFAQNCRNIEHLNLNG), 114–139 (CTKITDSTCYSLSRFCSKLKHLDLTS), 140–165 (CVSITNSSLKGISEGCRNLEYLNLSW), 166–191 (CDQITKDGIEALVRGCRGLKALLLRG), 192–217 (CTQLEDEALKHIQNYCHELVSLNLQS), 218–243 (CSRITDEGVVQICRGCHRLQALCLSG), 244–269 (CSNLTDASLTALGLNCPRLQILEAAR), 270–295 (CSHLTDAGFTLLARNCHELEKMDLEE), 296–321 (CILITDSTLIQLSIHCPKLQALSLSH), 322–350 (CELITDDGILHLSNSTCGHERLRVLELDN), 351–375 (CLLITDVALEHLENCRGLERLELYD), and 376–401 (CQQVTRAGIKRMRAQLPHVKVHAYFA). Positions 80–90 (LRKLSLRGCIG) are interaction with Calmodulin. K201 participates in a covalent cross-link: Glycyl lysine isopeptide (Lys-Gly) (interchain with G-Cter in ubiquitin). Phosphothreonine is present on T404. C420 carries the S-geranylgeranyl cysteine lipid modification. A CAAX motif motif is present at residues 420–423 (CVIL).

In terms of assembly, part of the SCF (SKP1-CUL1-F-box) E3 ubiquitin-protein ligase complex SCF(FBXL2) composed of CUL1, SKP1, RBX1 and FBXL2. Interacts with calmodulin; may antagonize substrate ubiquitination by SCF(FBXL2). May interact with PIK3R1. Interacts with PTPN13. As to quaternary structure, (Microbial infection) Interacts with hepatitis C virus non-structural protein 5A (NS5A) and less efficiently, with hepatitis C virus non-structural protein 5B (NS5B); a reaction crucial for hepatitis C virus RNA replication. Post-translationally, phosphorylated by GSK-beta (GSK3B), promoting recognition by FBXO3, leading to its ubiquitination by the SCF(FBXO3) complex. Ubiquitinated at Lys-201 by the SCF(FBXO3) complex in response to lipopolysaccharide (LPS), leading to its degradation by the proteasome. Expressed in brain, heart, kidney, liver, lung, pancreas and placenta.

It localises to the membrane. It participates in protein modification; protein ubiquitination. Functionally, calcium-activated substrate recognition component of the SCF (SKP1-cullin-F-box protein) E3 ubiquitin-protein ligase complex, SCF(FBXL2), which mediates the ubiquitination and subsequent proteasomal degradation of target proteins. Unlike many F-box proteins, FBXL2 does not seem to target phosphodegron within its substrates but rather calmodulin-binding motifs and is thereby antagonized by calmodulin. This is the case for the cyclins CCND2 and CCND3 which polyubiquitination and subsequent degradation are inhibited by calmodulin. Through CCND2 and CCND3 degradation induces cell-cycle arrest in G(0). SCF(FBXL2) also mediates PIK3R2 ubiquitination and proteasomal degradation thereby regulating phosphatidylinositol 3-kinase signaling and autophagy. PCYT1A monoubiquitination by SCF(FBXL2) and subsequent degradation regulates synthesis of phosphatidylcholine, which is utilized for formation of membranes and of pulmonary surfactant. The SCF(FBXL2) complex acts as a regulator of inflammation by mediating ubiquitination and degradation of TRAF proteins (TRAF1, TRAF2, TRAF3, TRAF4, TRAF5 and TRAF6). The SCF(FBXL2) complex acts as a negative regulator of the NLRP3 inflammasome by mediating ubiquitination and degradation of NLRP3. The chain is F-box/LRR-repeat protein 2 from Homo sapiens (Human).